Consider the following 577-residue polypeptide: DNA primase (577 aa).

The CHC2-type zinc finger occupies 40–64; that stretch reads CPFHHDKTPSFTVSNEKQFYYCFGC. The Toprim domain occupies 255-337; sequence VYLLVVEGYI…KKTLKFILLP (83 aa). The Mg(2+) site is built by Glu-261, Asp-305, and Asp-307.

Belongs to the DnaG primase family. In terms of assembly, monomer. Interacts with DnaB. Requires Zn(2+) as cofactor. The cofactor is Mg(2+).

It catalyses the reaction ssDNA + n NTP = ssDNA/pppN(pN)n-1 hybrid + (n-1) diphosphate.. Functionally, RNA polymerase that catalyzes the synthesis of short RNA molecules used as primers for DNA polymerase during DNA replication. The sequence is that of DNA primase from Buchnera aphidicola subsp. Acyrthosiphon pisum (strain APS) (Acyrthosiphon pisum symbiotic bacterium).